Reading from the N-terminus, the 403-residue chain is Dual-specificity RNA methyltransferase RlmN (403 aa).

E126 acts as the Proton acceptor in catalysis. Residues 132–375 (ETDRGTLCVS…VRTPRGRDIL (244 aa)) enclose the Radical SAM core domain. C139 and C378 are disulfide-bonded. Residues C146, C150, and C153 each contribute to the [4Fe-4S] cluster site. Residues 204-205 (GE), S236, 258-260 (SLH), and N335 each bind S-adenosyl-L-methionine. C378 functions as the S-methylcysteine intermediate in the catalytic mechanism.

It belongs to the radical SAM superfamily. RlmN family. The cofactor is [4Fe-4S] cluster.

It is found in the cytoplasm. The catalysed reaction is adenosine(2503) in 23S rRNA + 2 reduced [2Fe-2S]-[ferredoxin] + 2 S-adenosyl-L-methionine = 2-methyladenosine(2503) in 23S rRNA + 5'-deoxyadenosine + L-methionine + 2 oxidized [2Fe-2S]-[ferredoxin] + S-adenosyl-L-homocysteine. It carries out the reaction adenosine(37) in tRNA + 2 reduced [2Fe-2S]-[ferredoxin] + 2 S-adenosyl-L-methionine = 2-methyladenosine(37) in tRNA + 5'-deoxyadenosine + L-methionine + 2 oxidized [2Fe-2S]-[ferredoxin] + S-adenosyl-L-homocysteine. Its function is as follows. Specifically methylates position 2 of adenine 2503 in 23S rRNA and position 2 of adenine 37 in tRNAs. m2A2503 modification seems to play a crucial role in the proofreading step occurring at the peptidyl transferase center and thus would serve to optimize ribosomal fidelity. The chain is Dual-specificity RNA methyltransferase RlmN from Bradyrhizobium sp. (strain BTAi1 / ATCC BAA-1182).